The chain runs to 249 residues: DNA polymerase sliding clamp (249 aa).

The protein belongs to the PCNA family. In terms of assembly, homotrimer. The subunits circularize to form a toroid; DNA passes through its center. Replication factor C (RFC) is required to load the toroid on the DNA.

In terms of biological role, sliding clamp subunit that acts as a moving platform for DNA processing. Responsible for tethering the catalytic subunit of DNA polymerase and other proteins to DNA during high-speed replication. The sequence is that of DNA polymerase sliding clamp from Nanoarchaeum equitans (strain Kin4-M).